A 416-amino-acid polypeptide reads, in one-letter code: Tyrosine permease (416 aa).

Helical transmembrane passes span glycine 13 to methionine 33, alanine 34 to leucine 54, valine 86 to glycine 106, leucine 127 to valine 147, valine 153 to valine 173, leucine 192 to valine 212, isoleucine 231 to glycine 251, proline 260 to threonine 280, leucine 286 to glycine 306, valine 337 to phenylalanine 357, and isoleucine 389 to phenylalanine 409.

The protein belongs to the amino acid/polyamine transporter 2 family. Mtr/TnaB/TyrP permease subfamily.

The protein localises to the cell inner membrane. This Enterobacter agglomerans (Erwinia herbicola) protein is Tyrosine permease (tutB).